The sequence spans 976 residues: Dolichyl-phosphooligosaccharide-protein glycotransferase 1 (976 aa).

Topologically, residues 1–21 are cytoplasmic; it reads MVKSKVKKVEKGKEGEEKRST. A helical membrane pass occupies residues 22–42; sequence YVLLKKVLIPILVFGFAIYAF. The Extracellular segment spans residues 43-112; sequence YLRHLTAGKY…KVVSLFGYNE (70 aa). A DXD motif 1 motif is present at residues 55-57; sequence DPD. Aspartate 57 contributes to the Mn(2+) binding site. Residues 113-133 form a helical membrane-spanning segment; it reads LQAFLLWPPFVGFLGVIAVYL. Residues 134 to 135 are Cytoplasmic-facing; sequence LG. A helical membrane pass occupies residues 136–156; it reads RKVLNEWTGLWGAVVLTVSTA. Residues 157 to 165 are Extracellular-facing; that stretch reads NFSRTFSGN. A helical transmembrane segment spans residues 166–186; it reads ARGDGPFMALFIFASVAMLYY. Mn(2+) contacts are provided by arginine 167 and aspartate 169. A DXD motif 2 motif is present at residues 167-169; that stretch reads RGD. Topologically, residues 187 to 193 are cytoplasmic; sequence LKESNKT. Residues 194–214 form a helical membrane-spanning segment; that stretch reads RKIIYGTLFVLLTVISLGAWN. Residue glycine 215 is a topological domain, extracellular. Residues 216–236 traverse the membrane as a helical segment; it reads SPFGLMVLLGFASLQTIILFI. Residues 237–247 lie on the Cytoplasmic side of the membrane; it reads FGKLEELKKFV. A helical transmembrane segment spans residues 248 to 268; it reads KEFYPAYLAILAFGYALTFPG. Position 269 (isoleucine 269) is a topological domain, extracellular. The helical transmembrane segment at 270-290 threads the bilayer; that stretch reads VKIGGFIRFAFEVFLGLIFLL. At 291–306 the chain is on the cytoplasmic side; it reads VIMLYGGRYLNYSDKK. A helical membrane pass occupies residues 307–327; that stretch reads HRFLVVTIIVLLGFGGAYAYV. Topologically, residues 328 to 360 are extracellular; it reads GPKLFRLMGGAYQSTQVYETVQELAKTTIGDVK. The TIXE motif signature appears at 347 to 350; the sequence is TVQE. Residues 361–381 traverse the membrane as a helical segment; it reads AYYGVESGNGLIFFLSIPGLL. Topologically, residues 382-396 are cytoplasmic; it reads ILLTKYLYDLFKKAK. Residues 397 to 417 traverse the membrane as a helical segment; sequence SDNETLFALVFYTMSLYLLYL. Position 418 (alanine 418) is a topological domain, extracellular. Residues 419–439 traverse the membrane as a helical segment; that stretch reads VRFLFLASYAVALFFGIFIGF. Position 420 (arginine 420) interacts with a glycophospholipid. Residues 440–453 are Cytoplasmic-facing; it reads SMDVIEKMKENIGI. The helical transmembrane segment at 454–474 threads the bilayer; sequence KAALGIVLSLMILVIPFVHAP. The Extracellular portion of the chain corresponds to 475–976; it reads VLARSARALK…SASAPHHSSE (502 aa). The segment at 513-515 is interacts with target acceptor peptide in protein substrate; that stretch reads WWD. The WWDYG motif signature appears at 513–517; that stretch reads WWDYG. Position 518 (tyrosine 518) interacts with a glycophospholipid. Residues 573-580 carry the DK motif motif; it reads DWAKFNAI.

The protein belongs to the STT3 family. Requires Mn(2+) as cofactor. Mg(2+) serves as cofactor.

The protein resides in the cell membrane. It carries out the reaction an archaeal dolichyl phosphooligosaccharide + [protein]-L-asparagine = an archaeal dolichyl phosphate + a glycoprotein with the oligosaccharide chain attached by N-beta-D-glycosyl linkage to a protein L-asparagine.. Its pathway is protein modification; protein glycosylation. In terms of biological role, oligosaccharyl transferase (OST) that catalyzes the initial transfer of a defined glycan (ManNAcXyl(2)GlcAMan(2)GalNAc in Pyrococcus) from the lipid carrier dolichol-monophosphate to an asparagine residue within an Asn-X-Ser/Thr consensus motif in nascent polypeptide chains, the first step in protein N-glycosylation. The protein is Dolichyl-phosphooligosaccharide-protein glycotransferase 1 (aglB1) of Pyrococcus horikoshii (strain ATCC 700860 / DSM 12428 / JCM 9974 / NBRC 100139 / OT-3).